Reading from the N-terminus, the 355-residue chain is Protein RecA (355 aa).

67–74 (GPESSGKT) contacts ATP.

Belongs to the RecA family.

Its subcellular location is the cytoplasm. Functionally, can catalyze the hydrolysis of ATP in the presence of single-stranded DNA, the ATP-dependent uptake of single-stranded DNA by duplex DNA, and the ATP-dependent hybridization of homologous single-stranded DNAs. It interacts with LexA causing its activation and leading to its autocatalytic cleavage. The sequence is that of Protein RecA from Shewanella baltica (strain OS223).